Reading from the N-terminus, the 80-residue chain is UPF0154 protein SH1564 (80 aa).

Residues 4-24 form a helical membrane-spanning segment; that stretch reads WLAILLIIVALIGGLVGGFFL.

This sequence belongs to the UPF0154 family.

It localises to the membrane. This chain is UPF0154 protein SH1564, found in Staphylococcus haemolyticus (strain JCSC1435).